The following is a 320-amino-acid chain: NADH-ubiquinone oxidoreductase chain 1 (320 aa).

8 consecutive transmembrane segments (helical) span residues 3–23 (LITI…VAFL), 72–92 (ILLI…WTPI), 103–123 (LGFL…LWAG), 147–167 (VTLG…TMQL), 174–194 (HIWL…STLA), 226–246 (FFLA…ILFI), 255–275 (ELFL…FLWI), and 295–315 (FLPL…SISG).

It belongs to the complex I subunit 1 family.

The protein resides in the mitochondrion inner membrane. The catalysed reaction is a ubiquinone + NADH + 5 H(+)(in) = a ubiquinol + NAD(+) + 4 H(+)(out). Core subunit of the mitochondrial membrane respiratory chain NADH dehydrogenase (Complex I) that is believed to belong to the minimal assembly required for catalysis. Complex I functions in the transfer of electrons from NADH to the respiratory chain. The immediate electron acceptor for the enzyme is believed to be ubiquinone. This Varanus jobiensis (Peach throat monitor) protein is NADH-ubiquinone oxidoreductase chain 1 (MT-ND1).